The chain runs to 606 residues: Transmembrane 9 superfamily member 1 (606 aa).

A signal peptide spans 1–27 (MTVLGHPRSWSCRWWPLLLLLLLTGRE). An N-linked (GlcNAc...) asparagine glycan is attached at Asn178. 4 helical membrane-spanning segments follow: residues 237–257 (LSIINSMVLVFLLVGFVAVIL), 310–330 (VLGVGAQFLALGTGIIVMALL), 339–359 (GAINSAAILLYALTCCISGYV), and 373–393 (VWNIILTTSLFSVPFFLTWSV). Asn401 carries an N-linked (GlcNAc...) asparagine glycan. The next 4 membrane-spanning stretches (helical) occupy residues 412–432 (ILLLLTVWLLVGFPLTVIGGI), 469–489 (VGGFLPFSAISVELYYIFATV), 499–519 (GILFFVFAILLSVGACISIAL), and 535–555 (SVLSVGSTGLFIFLYSVFYYA). Asn559 carries an N-linked (GlcNAc...) asparagine glycan. The chain crosses the membrane as a helical span at residues 570 to 590 (FGYSLLTGYVFFLMLGTISFF).

Belongs to the nonaspanin (TM9SF) (TC 9.A.2) family.

It is found in the lysosome membrane. The protein resides in the cytoplasmic vesicle. The protein localises to the autophagosome membrane. Functionally, plays an essential role in autophagy. In Bos taurus (Bovine), this protein is Transmembrane 9 superfamily member 1 (TM9SF1).